Reading from the N-terminus, the 198-residue chain is Inner membrane-spanning protein YciB (198 aa).

A run of 5 helical transmembrane segments spans residues 36–56, 67–87, 90–110, 133–153, and 162–182; these read IFSATAMLIISSVVVYGILYI, LTLVACLVFGSLTLAFHSETF, WKAPVVNWLFAVAFAGSHFIG, LNIAWIIFFLFCGAANLYVAF, and FKVFGSLGMTLIFLVGQGIYL.

It belongs to the YciB family.

The protein resides in the cell inner membrane. Plays a role in cell envelope biogenesis, maintenance of cell envelope integrity and membrane homeostasis. In Pseudomonas syringae pv. tomato (strain ATCC BAA-871 / DC3000), this protein is Inner membrane-spanning protein YciB.